Reading from the N-terminus, the 104-residue chain is MKNEVFFGEGMKVVKEKYPDLYDIIVKLNDTVFTGKTLDYKTQKLIAIGIVASRCDEVAIEKQMKSAMKELGITKEEIADVLRVVLLTSGMPAFTKAMKILEKL.

This sequence to M.jannaschii MJ1511.

This is an uncharacterized protein from Methanocaldococcus jannaschii (strain ATCC 43067 / DSM 2661 / JAL-1 / JCM 10045 / NBRC 100440) (Methanococcus jannaschii).